Here is a 327-residue protein sequence, read N- to C-terminus: MSLTTDIKDELARVSVTRQSAKAAEVSALLRFAGEMQAIAGRLVIEVNLDSMAVARRLQEFISQLYDTDVQVHTVTPGGARKNPKYLVRIVHNADEVARRAGLVTRSGHLIRGLSPQVISGTISEAEAAWRGAFLAGGSLTDPGRSSALEVVCPCQEAALALVGCARRIGVTAKTKDSRGSERVVVRDAEAIGALLTRIGAQKSRIVWEEKRLSREVRTPANRLANFDDANLRRSARAAVAAAARVERAMKILGDDVPEHLAEAGQLRVQHRQASLEELGRLADPQMTKDAVAGRIRRLLTTADKRARDLGIPDTTVAVTEELLDEL.

Residues 275 to 308 (SLEELGRLADPQMTKDAVAGRIRRLLTTADKRAR) constitute a DNA-binding region (H-T-H motif).

This sequence belongs to the WhiA family.

Involved in cell division and chromosome segregation. This chain is Probable cell division protein WhiA, found in Corynebacterium efficiens (strain DSM 44549 / YS-314 / AJ 12310 / JCM 11189 / NBRC 100395).